The sequence spans 180 residues: Pro-glucagon (180 aa).

Residues 1–20 form the signal peptide; it reads MKTIYFVAGLLIMLVQGSWQ. The interval 25 to 58 is disordered; the sequence is DTEENPRSFPASQTEAHEDPDEMNEDKRHSQGTF. S54 is subject to Phosphoserine. A propeptide spanning residues 84–89 is cleaved from the precursor; that stretch reads NRNNIA. Phosphoserine occurs at positions 105 and 108. Position 127 is an arginine amide (R127). Residues 131–145 constitute a propeptide that is removed on maturation; that stretch reads DFPEEVAIAEELGRR. S150 and S152 each carry phosphoserine.

This sequence belongs to the glucagon family. Post-translationally, proglucagon is post-translationally processed in a tissue-specific manner in pancreatic A cells and intestinal L cells. In pancreatic A cells, the major bioactive hormone is glucagon cleaved by PCSK2/PC2. In the intestinal L cells PCSK1/PC1 liberates GLP-1, GLP-2, glicentin and oxyntomodulin. GLP-1 is further N-terminally truncated by post-translational processing in the intestinal L cells resulting in GLP-1(7-37) GLP-1-(7-36)amide. The C-terminal amidation is neither important for the metabolism of GLP-1 nor for its effects on the endocrine pancreas. Secreted in the A cells of the islets of Langerhans. As to expression, secreted in the A cells of the islets of Langerhans. Secreted from enteroendocrine L cells throughout the gastrointestinal tract. Also secreted in selected neurons in the brain. In terms of tissue distribution, secreted from enteroendocrine cells throughout the gastrointestinal tract. Also secreted in selected neurons in the brain. Secreted from enteroendocrine cells throughout the gastrointestinal tract.

It is found in the secreted. Plays a key role in glucose metabolism and homeostasis. Regulates blood glucose by increasing gluconeogenesis and decreasing glycolysis. A counterregulatory hormone of insulin, raises plasma glucose levels in response to insulin-induced hypoglycemia. Plays an important role in initiating and maintaining hyperglycemic conditions in diabetes. Functionally, potent stimulator of glucose-dependent insulin release. Also stimulates insulin release in response to IL6. Plays important roles on gastric motility and the suppression of plasma glucagon levels. May be involved in the suppression of satiety and stimulation of glucose disposal in peripheral tissues, independent of the actions of insulin. Has growth-promoting activities on intestinal epithelium. May also regulate the hypothalamic pituitary axis (HPA) via effects on LH, TSH, CRH, oxytocin, and vasopressin secretion. Increases islet mass through stimulation of islet neogenesis and pancreatic beta cell proliferation. Inhibits beta cell apoptosis. In terms of biological role, stimulates intestinal growth and up-regulates villus height in the small intestine, concomitant with increased crypt cell proliferation and decreased enterocyte apoptosis. The gastrointestinal tract, from the stomach to the colon is the principal target for GLP-2 action. Plays a key role in nutrient homeostasis, enhancing nutrient assimilation through enhanced gastrointestinal function, as well as increasing nutrient disposal. Stimulates intestinal glucose transport and decreases mucosal permeability. Its function is as follows. Significantly reduces food intake. Inhibits gastric emptying in humans. Suppression of gastric emptying may lead to increased gastric distension, which may contribute to satiety by causing a sensation of fullness. May modulate gastric acid secretion and the gastro-pyloro-duodenal activity. May play an important role in intestinal mucosal growth in the early period of life. The sequence is that of Pro-glucagon (Gcg) from Mus musculus (Mouse).